The primary structure comprises 123 residues: Cell division protein SepF (123 aa).

It belongs to the SepF family. In terms of assembly, homodimer. Interacts with FtsZ.

Its subcellular location is the cytoplasm. In terms of biological role, cell division protein that is part of the divisome complex and is recruited early to the Z-ring. Probably stimulates Z-ring formation, perhaps through the cross-linking of FtsZ protofilaments. Its function overlaps with FtsA. This Tropheryma whipplei (strain TW08/27) (Whipple's bacillus) protein is Cell division protein SepF.